The chain runs to 480 residues: Aspartyl/glutamyl-tRNA(Asn/Gln) amidotransferase subunit B (480 aa).

The protein belongs to the GatB/GatE family. GatB subfamily. As to quaternary structure, heterotrimer of A, B and C subunits.

It carries out the reaction L-glutamyl-tRNA(Gln) + L-glutamine + ATP + H2O = L-glutaminyl-tRNA(Gln) + L-glutamate + ADP + phosphate + H(+). It catalyses the reaction L-aspartyl-tRNA(Asn) + L-glutamine + ATP + H2O = L-asparaginyl-tRNA(Asn) + L-glutamate + ADP + phosphate + 2 H(+). Allows the formation of correctly charged Asn-tRNA(Asn) or Gln-tRNA(Gln) through the transamidation of misacylated Asp-tRNA(Asn) or Glu-tRNA(Gln) in organisms which lack either or both of asparaginyl-tRNA or glutaminyl-tRNA synthetases. The reaction takes place in the presence of glutamine and ATP through an activated phospho-Asp-tRNA(Asn) or phospho-Glu-tRNA(Gln). This Streptococcus pneumoniae (strain Hungary19A-6) protein is Aspartyl/glutamyl-tRNA(Asn/Gln) amidotransferase subunit B.